The primary structure comprises 272 residues: Phosphoribosylformylglycinamidine synthase subunit PurQ (272 aa).

The 265-residue stretch at valine 8 to lysine 272 folds into the Glutamine amidotransferase type-1 domain. The active-site Nucleophile is the cysteine 98. Catalysis depends on residues histidine 225, glutamate 227, and glutamate 235.

In terms of assembly, part of the FGAM synthase complex composed of 1 PurL, 1 PurQ and 2 PurS subunits.

The protein resides in the cytoplasm. The catalysed reaction is N(2)-formyl-N(1)-(5-phospho-beta-D-ribosyl)glycinamide + L-glutamine + ATP + H2O = 2-formamido-N(1)-(5-O-phospho-beta-D-ribosyl)acetamidine + L-glutamate + ADP + phosphate + H(+). It catalyses the reaction L-glutamine + H2O = L-glutamate + NH4(+). The protein operates within purine metabolism; IMP biosynthesis via de novo pathway; 5-amino-1-(5-phospho-D-ribosyl)imidazole from N(2)-formyl-N(1)-(5-phospho-D-ribosyl)glycinamide: step 1/2. Functionally, part of the phosphoribosylformylglycinamidine synthase complex involved in the purines biosynthetic pathway. Catalyzes the ATP-dependent conversion of formylglycinamide ribonucleotide (FGAR) and glutamine to yield formylglycinamidine ribonucleotide (FGAM) and glutamate. The FGAM synthase complex is composed of three subunits. PurQ produces an ammonia molecule by converting glutamine to glutamate. PurL transfers the ammonia molecule to FGAR to form FGAM in an ATP-dependent manner. PurS interacts with PurQ and PurL and is thought to assist in the transfer of the ammonia molecule from PurQ to PurL. The polypeptide is Phosphoribosylformylglycinamidine synthase subunit PurQ (Methanococcus maripaludis (strain DSM 14266 / JCM 13030 / NBRC 101832 / S2 / LL)).